The sequence spans 396 residues: Cell adhesion molecule 3 (396 aa).

An N-terminal signal peptide occupies residues Met-1–Ala-22. The region spanning Asn-23–Val-124 is the Ig-like V-type domain. The Extracellular portion of the chain corresponds to Asn-23 to His-328. 3 cysteine pairs are disulfide-bonded: Cys-48–Cys-108, Cys-150–Cys-207, and Cys-252–Cys-297. Ig-like C2-type domains lie at Pro-128–Glu-226 and Pro-231–Asn-313. Asn-288 carries N-linked (GlcNAc...) asparagine glycosylation. A helical membrane pass occupies residues Ala-329–Leu-349. Residues Gly-350–Ile-396 lie on the Cytoplasmic side of the membrane. A disordered region spans residues Ala-365–Ile-396. Residue Ser-386 is modified to Phosphoserine.

This sequence belongs to the nectin family. Homodimer. Can form trans-heterodimers with NECTIN3. Interacts with EPB41L1, DLG3, PALS2 and CASK.

Its subcellular location is the cell membrane. It localises to the cell junction. Involved in cell-cell adhesion. Has both calcium-independent homophilic cell-cell adhesion activity and calcium-independent heterophilic cell-cell adhesion activity with IGSF4, NECTIN1 and NECTIN3. Interaction with EPB41L1 may regulate structure or function of cell-cell junctions. The sequence is that of Cell adhesion molecule 3 (Cadm3) from Rattus norvegicus (Rat).